A 402-amino-acid chain; its full sequence is Nicotinate phosphoribosyltransferase (402 aa).

H226 carries the phosphohistidine; by autocatalysis modification.

It belongs to the NAPRTase family. In terms of processing, transiently phosphorylated on a His residue during the reaction cycle. Phosphorylation strongly increases the affinity for substrates and increases the rate of nicotinate D-ribonucleotide production. Dephosphorylation regenerates the low-affinity form of the enzyme, leading to product release.

The catalysed reaction is nicotinate + 5-phospho-alpha-D-ribose 1-diphosphate + ATP + H2O = nicotinate beta-D-ribonucleotide + ADP + phosphate + diphosphate. It functions in the pathway cofactor biosynthesis; NAD(+) biosynthesis; nicotinate D-ribonucleotide from nicotinate: step 1/1. In terms of biological role, catalyzes the synthesis of beta-nicotinate D-ribonucleotide from nicotinate and 5-phospho-D-ribose 1-phosphate at the expense of ATP. This Chromobacterium violaceum (strain ATCC 12472 / DSM 30191 / JCM 1249 / CCUG 213 / NBRC 12614 / NCIMB 9131 / NCTC 9757 / MK) protein is Nicotinate phosphoribosyltransferase.